A 150-amino-acid chain; its full sequence is Arginine repressor (150 aa).

This sequence belongs to the ArgR family.

Its subcellular location is the cytoplasm. It functions in the pathway amino-acid biosynthesis; L-arginine biosynthesis [regulation]. Regulates arginine biosynthesis genes. The sequence is that of Arginine repressor from Clostridium botulinum (strain Alaska E43 / Type E3).